Consider the following 634-residue polypeptide: TATA box-binding protein-associated factor RNA polymerase I subunit B (634 aa).

Residues 19–51 form an RRN7-type zinc finger; that stretch reads LVCEYCGHGSEYAEDDADNGFFTCRQCSAIHTS. Zn(2+) is bound by residues cysteine 21, cysteine 24, cysteine 42, and cysteine 45. Residues 51–80 form a B-reader region; the sequence is STQNTATNPFDFPMTPAHLSAHRRPTQPTP. The segment at 56 to 117 is disordered; it reads ATNPFDFPMT…EPRDFATGAN (62 aa). A compositionally biased stretch (pro residues) spans 77-87; the sequence is QPTPTPKPFPA. Residues 81 to 83 form a B-linker region; sequence TPK. The N-terminal cyclin fold stretch occupies residues 84–281; sequence PFPAPRGAAT…DKLLGSSLND (198 aa). Residues 88-98 show a composition bias toward low complexity; it reads PRGAATGAAAP. The interval 282-284 is C-terminal cyclin fold; that stretch reads CPL.

It belongs to the RRN7/TAF1B family.

Its subcellular location is the nucleus. The protein localises to the nucleolus. Its function is as follows. Component of RNA polymerase I core factor complex that acts as a GTF2B/TFIIB-like factor and plays a key role in multiple steps during transcription initiation such as pre-initiation complex (PIC) assembly and postpolymerase recruitment events in polymerase I (Pol I) transcription. Binds rDNA promoters and plays a role in Pol I recruitment. This chain is TATA box-binding protein-associated factor RNA polymerase I subunit B, found in Oryza sativa subsp. indica (Rice).